Here is a 183-residue protein sequence, read N- to C-terminus: ATP synthase subunit delta (183 aa).

Belongs to the ATPase delta chain family. In terms of assembly, F-type ATPases have 2 components, F(1) - the catalytic core - and F(0) - the membrane proton channel. F(1) has five subunits: alpha(3), beta(3), gamma(1), delta(1), epsilon(1). F(0) has three main subunits: a(1), b(2) and c(10-14). The alpha and beta chains form an alternating ring which encloses part of the gamma chain. F(1) is attached to F(0) by a central stalk formed by the gamma and epsilon chains, while a peripheral stalk is formed by the delta and b chains.

The protein resides in the cell membrane. Its function is as follows. F(1)F(0) ATP synthase produces ATP from ADP in the presence of a proton or sodium gradient. F-type ATPases consist of two structural domains, F(1) containing the extramembraneous catalytic core and F(0) containing the membrane proton channel, linked together by a central stalk and a peripheral stalk. During catalysis, ATP synthesis in the catalytic domain of F(1) is coupled via a rotary mechanism of the central stalk subunits to proton translocation. In terms of biological role, this protein is part of the stalk that links CF(0) to CF(1). It either transmits conformational changes from CF(0) to CF(1) or is implicated in proton conduction. The chain is ATP synthase subunit delta from Mycoplasmopsis synoviae (strain 53) (Mycoplasma synoviae).